Consider the following 391-residue polypeptide: MSRFLICSFALVLLYPAGIDMYLVGLPRIAADLNASEAQLHIAFSVYLAGMAAAMLFAGKVADRSGRKPVAIPGAALFIIASVFCSLAETSTLFLAGRFLQGLGAGCCYVVAFAILRDTLDDRRRAKVLSLLNGITCIIPVLAPVLGHLIMLKFPWQSLFWAMAMMGIAVLMLSLFILKETRPAAPAASDKPRENSESLLNRFFLSRVVITTLSVSVILTFVNTSPVLLMEIMGFERGEYATIMALTAGVSMTVSFSTPFALGIFKPRTLMITSQVLFLAAGITLAVSPSHAVSLFGITLICAGFSVGFGVAMSQALGPFSLRAGVASSTLGIAQVCGSSLWIWLAAVVGIGAWNMLIGILIACSIVSLLLIMFVAPGRPVAAHEEIHHHA.

Helical transmembrane passes span 4 to 24, 42 to 62, 69 to 89, 93 to 113, 131 to 151, 158 to 178, 203 to 222, 245 to 265, 269 to 289, 293 to 313, 331 to 351, and 356 to 376; these read FLICSFALVLLYPAGIDMYLV, IAFSVYLAGMAAAMLFAGKVA, PVAIPGAALFIIASVFCSLAE, LFLAGRFLQGLGAGCCYVVAF, LLNGITCIIPVLAPVLGHLIM, SLFWAMAMMGIAVLMLSLFIL, FFLSRVVITTLSVSVILTFV, ALTAGVSMTVSFSTPFALGIF, TLMITSQVLFLAAGITLAVSP, VSLFGITLICAGFSVGFGVAM, LGIAQVCGSSLWIWLAAVVGI, and MLIGILIACSIVSLLLIMFVA.

This sequence belongs to the major facilitator superfamily. DHA1 family. MdtL (TC 2.A.1.2.22) subfamily.

The protein localises to the cell inner membrane. Its function is as follows. Confers resistance to chloramphenicol. This is Multidrug resistance protein MdtL from Escherichia coli (strain 55989 / EAEC).